Here is a 179-residue protein sequence, read N- to C-terminus: NADH:FAD oxidoreductase (179 aa).

An FAD-binding site is contributed by 48–51 (TCSA). Residue 54 to 57 (SVCD) participates in NAD(+) binding. Residues 65-71 (CINRKSY), A99, 104-109 (VPMEER), and S144 each bind FAD. NAD(+) contacts are provided by residues H145 and 166–169 (YHRR). Y166 lines the FAD pocket.

The protein belongs to the non-flavoprotein flavin reductase family. In terms of assembly, homodimer. The chlorophenol-4-monooxygenase is composed of an oxygenase component TftD and a reductase component TftC.

The catalysed reaction is FADH2 + NAD(+) = FAD + NADH + 2 H(+). Its pathway is xenobiotic degradation. In terms of biological role, reductase component of a two-component system that degrades 2,4,5-trichlorophenol. TftC provides the FADH(2) required by TftD. TftD oxidizes 2,4,5-trichlorophenol (2,4,5-TCP) to 2,5-dichloro-p-benzoquinone, which is chemically reduced to 2,5-dichloro-p-hydroquinone (2,5-DiCHQ). Then, TftD oxidizes the latter to 5-chloro-2-hydroxy-p-benzoquinone. This chain is NADH:FAD oxidoreductase (tftC), found in Burkholderia cepacia (Pseudomonas cepacia).